Reading from the N-terminus, the 389-residue chain is Chalcone synthase 4 (389 aa).

Cys-164 is a catalytic residue.

This sequence belongs to the thiolase-like superfamily. Chalcone/stilbene synthases family.

The enzyme catalyses (E)-4-coumaroyl-CoA + 3 malonyl-CoA + 3 H(+) = 2',4,4',6'-tetrahydroxychalcone + 3 CO2 + 4 CoA. Its pathway is secondary metabolite biosynthesis; flavonoid biosynthesis. Its function is as follows. The primary product of this enzyme is 4,2',4',6'-tetrahydroxychalcone (also termed naringenin-chalcone or chalcone) which can under specific conditions spontaneously isomerize into naringenin. This chain is Chalcone synthase 4 (CHS4), found in Pisum sativum (Garden pea).